Consider the following 397-residue polypeptide: Alpha-2B adrenergic receptor (397 aa).

The helical transmembrane segment at 1–25 (AIAAIIIFLILFTIFGNALVILAVL) threads the bilayer. The Cytoplasmic portion of the chain corresponds to 26–36 (TSRSLRAPQNL). Residues 37 to 62 (FLVSLAAADILVATLIIPFSLANELL) traverse the membrane as a helical segment. Residues 63-72 (GYWYFRRMWC) are Extracellular-facing. Cys72 and Cys151 are oxidised to a cystine. A helical transmembrane segment spans residues 73–95 (KVYLALDVLFCTSSIVHLCAISL). At 96-117 (DRYWAVSRALEYNSKRTPRRIK) the chain is on the cytoplasmic side. A helical transmembrane segment spans residues 118–140 (CIILMVWLIAAVISLPSLVYKGD). At 141 to 156 (QGPQPSGAPQCNLNQE) the chain is on the extracellular side. The chain crosses the membrane as a helical span at residues 157–180 (TWYILASSIGSFFAPCLIMILVYL). The Cytoplasmic segment spans residues 181 to 361 (RIYLIAKRSH…LSREKRFTFV (181 aa)). Disordered regions lie at residues 193 to 212 (GPRAKGAPGKSKFKQSRQVP) and 230 to 319 (AAGE…LQQP). The segment covering 280–300 (SLEEEAEEEEEGEEEREEECE) has biased composition (acidic residues). Low complexity predominate over residues 301–319 (PQALPASPASACSPPLQQP). Residues 362-385 (LAVVIGVFVLCWFPFFFSYSLGAI) traverse the membrane as a helical segment. Residues 386-394 (CPQQCKVPH) lie on the Extracellular side of the membrane. The chain crosses the membrane as a helical span at residues 395-397 (DLF).

This sequence belongs to the G-protein coupled receptor 1 family. Adrenergic receptor subfamily. ADRA2B sub-subfamily. Interacts with RAB26. Interacts with PPP1R9B.

Its subcellular location is the cell membrane. In terms of biological role, alpha-2 adrenergic receptors mediate the catecholamine-induced inhibition of adenylate cyclase through the action of G proteins. This chain is Alpha-2B adrenergic receptor (ADRA2B), found in Talpa europaea (European mole).